The following is a 236-amino-acid chain: Putative (5-formylfuran-3-yl)methyl phosphate synthase (236 aa).

Lysine 38 (schiff-base intermediate with substrate) is an active-site residue. The Proton acceptor role is filled by lysine 94.

It belongs to the MfnB family.

It carries out the reaction 2 D-glyceraldehyde 3-phosphate = 4-(hydroxymethyl)-2-furancarboxaldehyde phosphate + phosphate + 2 H2O. In terms of biological role, catalyzes the formation of 4-(hydroxymethyl)-2-furancarboxaldehyde phosphate (4-HFC-P) from two molecules of glyceraldehyde-3-P (GA-3-P). The chain is Putative (5-formylfuran-3-yl)methyl phosphate synthase from Methylorubrum extorquens (Methylobacterium dichloromethanicum).